Reading from the N-terminus, the 273-residue chain is MPLSTSLLGKKSTYKDSYDATLLFKIPRINNRNELGINSNNLPFYGVDIWNTYELSCLNKNGKPWVGVGTFYIPTDSENIVESKSFKLYLNSFNNFVVESVEELERIILQDLSNVTHAKVTGRIFPINTKIEFSIPSGKNIDDLDIVCNNYGPPDNSLIEYEDVLVEEEINSNLLKSNCLVTGQPDWGTIVIKYKGKKLKHDSFLKYLISFRNCNEFAEQCAERIFTDIKNAINPDFLSIYIVYTRRGGIDICPYRFTNKSYTLPSDKRFIRQ.

81–83 (VES) serves as a coordination point for substrate. 83–84 (SK) contributes to the NADPH binding site. The Thioimide intermediate role is filled by C179. The Proton donor role is filled by D186. 218–219 (AE) contacts substrate. An NADPH-binding site is contributed by 247–248 (RG).

It belongs to the GTP cyclohydrolase I family. QueF type 2 subfamily. In terms of assembly, homodimer.

It is found in the cytoplasm. It carries out the reaction 7-aminomethyl-7-carbaguanine + 2 NADP(+) = 7-cyano-7-deazaguanine + 2 NADPH + 3 H(+). It functions in the pathway tRNA modification; tRNA-queuosine biosynthesis. Functionally, catalyzes the NADPH-dependent reduction of 7-cyano-7-deazaguanine (preQ0) to 7-aminomethyl-7-deazaguanine (preQ1). The protein is NADPH-dependent 7-cyano-7-deazaguanine reductase of Rickettsia felis (strain ATCC VR-1525 / URRWXCal2) (Rickettsia azadi).